The following is a 157-amino-acid chain: ATP synthase subunit b' (157 aa).

Residues 22–42 form a helical membrane-spanning segment; that stretch reads ATLPLIAIQFLLLVAVLNSLF.

It belongs to the ATPase B chain family. As to quaternary structure, F-type ATPases have 2 components, F(1) - the catalytic core - and F(0) - the membrane proton channel. F(1) has five subunits: alpha(3), beta(3), gamma(1), delta(1), epsilon(1). F(0) has four main subunits: a(1), b(1), b'(1) and c(10-14). The alpha and beta chains form an alternating ring which encloses part of the gamma chain. F(1) is attached to F(0) by a central stalk formed by the gamma and epsilon chains, while a peripheral stalk is formed by the delta, b and b' chains.

It localises to the cellular thylakoid membrane. Its function is as follows. F(1)F(0) ATP synthase produces ATP from ADP in the presence of a proton or sodium gradient. F-type ATPases consist of two structural domains, F(1) containing the extramembraneous catalytic core and F(0) containing the membrane proton channel, linked together by a central stalk and a peripheral stalk. During catalysis, ATP synthesis in the catalytic domain of F(1) is coupled via a rotary mechanism of the central stalk subunits to proton translocation. Functionally, component of the F(0) channel, it forms part of the peripheral stalk, linking F(1) to F(0). The b'-subunit is a diverged and duplicated form of b found in plants and photosynthetic bacteria. The chain is ATP synthase subunit b' from Synechococcus sp. (strain JA-2-3B'a(2-13)) (Cyanobacteria bacterium Yellowstone B-Prime).